A 327-amino-acid chain; its full sequence is Biotin synthase (327 aa).

In terms of domain architecture, Radical SAM core spans 49–282 (FNKEKIDLCS…KKVIRLCGGR (234 aa)). Residues Cys67, Cys71, and Cys74 each contribute to the [4Fe-4S] cluster site. [2Fe-2S] cluster contacts are provided by Ser110, Cys142, Cys201, and Arg277.

It belongs to the radical SAM superfamily. Biotin synthase family. Homodimer. It depends on [4Fe-4S] cluster as a cofactor. [2Fe-2S] cluster serves as cofactor.

It carries out the reaction (4R,5S)-dethiobiotin + (sulfur carrier)-SH + 2 reduced [2Fe-2S]-[ferredoxin] + 2 S-adenosyl-L-methionine = (sulfur carrier)-H + biotin + 2 5'-deoxyadenosine + 2 L-methionine + 2 oxidized [2Fe-2S]-[ferredoxin]. It participates in cofactor biosynthesis; biotin biosynthesis; biotin from 7,8-diaminononanoate: step 2/2. Catalyzes the conversion of dethiobiotin (DTB) to biotin by the insertion of a sulfur atom into dethiobiotin via a radical-based mechanism. This Methanococcus maripaludis (strain C7 / ATCC BAA-1331) protein is Biotin synthase.